The sequence spans 244 residues: Phosphoadenosine 5'-phosphosulfate reductase (244 aa).

The Nucleophile; cysteine thiosulfonate intermediate role is filled by Cys-239.

This sequence belongs to the PAPS reductase family. CysH subfamily.

It is found in the cytoplasm. It carries out the reaction [thioredoxin]-disulfide + sulfite + adenosine 3',5'-bisphosphate + 2 H(+) = [thioredoxin]-dithiol + 3'-phosphoadenylyl sulfate. Its pathway is sulfur metabolism; hydrogen sulfide biosynthesis; sulfite from sulfate: step 3/3. In terms of biological role, catalyzes the formation of sulfite from phosphoadenosine 5'-phosphosulfate (PAPS) using thioredoxin as an electron donor. The sequence is that of Phosphoadenosine 5'-phosphosulfate reductase from Klebsiella pneumoniae (strain 342).